The sequence spans 897 residues: Alanine--tRNA ligase (897 aa).

Histidine 581, histidine 585, cysteine 684, and histidine 688 together coordinate Zn(2+).

It belongs to the class-II aminoacyl-tRNA synthetase family. It depends on Zn(2+) as a cofactor.

It is found in the cytoplasm. The catalysed reaction is tRNA(Ala) + L-alanine + ATP = L-alanyl-tRNA(Ala) + AMP + diphosphate. Catalyzes the attachment of alanine to tRNA(Ala) in a two-step reaction: alanine is first activated by ATP to form Ala-AMP and then transferred to the acceptor end of tRNA(Ala). Also edits incorrectly charged Ser-tRNA(Ala) and Gly-tRNA(Ala) via its editing domain. This Mycobacterium sp. (strain KMS) protein is Alanine--tRNA ligase.